A 695-amino-acid polypeptide reads, in one-letter code: Tail-specific protease (695 aa).

The N-terminal stretch at 1–29 is a signal peptide; it reads MVMKFKMSKNVICYTWLSVCLSSAIPAFA. The 61-residue stretch at 256-316 folds into the PDZ domain; the sequence is IGTTLQSEDD…RLEDLVEKIK (61 aa). Active-site charge relay system residues include Ser459, Asp470, and Lys484.

This sequence belongs to the peptidase S41A family.

The protein resides in the cell inner membrane. The enzyme catalyses The enzyme shows specific recognition of a C-terminal tripeptide, Xaa-Yaa-Zaa, in which Xaa is preferably Ala or Leu, Yaa is preferably Ala or Tyr, and Zaa is preferably Ala, but then cleaves at a variable distance from the C-terminus. A typical cleavage is -Ala-Ala-|-Arg-Ala-Ala-Lys-Glu-Asn-Tyr-Ala-Leu-Ala-Ala.. Involved in the cleavage of a C-terminal peptide of 11 residues from the precursor form of penicillin-binding protein 3 (PBP3). May be involved in protection of the bacterium from thermal and osmotic stresses. This is Tail-specific protease (prc) from Haemophilus influenzae (strain ATCC 51907 / DSM 11121 / KW20 / Rd).